A 497-amino-acid polypeptide reads, in one-letter code: Signal recognition particle subunit SRP54 1 (497 aa).

Residues 1–295 are G-domain; sequence MVLAQLGGSI…DVKPFVSRLL (295 aa). GTP is bound by residues 108–115, 190–194, and 248–251; these read GLQGSGKT, DTSGR, and TKLD. The segment at 296–497 is M-domain; it reads GMGDLSGLMD…MLGGMGLGGD (202 aa).

The protein belongs to the GTP-binding SRP family. SRP54 subfamily. In terms of assembly, component of a signal recognition particle (SRP) complex that consists of a 7SL RNA molecule of 300 nucleotides and six protein subunits: SRP72, SRP68, SRP54, SRP19, SRP14 and SRP9.

The protein resides in the cytoplasm. It localises to the endoplasmic reticulum. It carries out the reaction GTP + H2O = GDP + phosphate + H(+). Component of the signal recognition particle (SRP) complex, a ribonucleoprotein complex that mediates the cotranslational targeting of secretory and membrane proteins to the endoplasmic reticulum (ER). As part of the SRP complex, associates with the SRP receptor (SR) component SRPRA to target secretory proteins to the endoplasmic reticulum membrane. Binds to the signal sequence of presecretory proteins when they emerge from the ribosomes. Displays basal GTPase activity, and stimulates reciprocal GTPase activation of the SR subunit SRPRA. Forms a guanosine 5'-triphosphate (GTP)-dependent complex with the SR subunit SRPRA. SR compaction and GTPase mediated rearrangement of SR drive SRP-mediated cotranslational protein translocation into the ER. Requires the presence of SRP9/SRP14 and/or SRP19 to stably interact with RNA. The sequence is that of Signal recognition particle subunit SRP54 1 (SRP54-1) from Hordeum vulgare (Barley).